Reading from the N-terminus, the 421-residue chain is ATP-dependent RNA helicase RhlB (421 aa).

A Q motif motif is present at residues 9–37 (QKFSDFALHPQVVEALEKKRFYNCTPIQA). In terms of domain architecture, Helicase ATP-binding spans 40–219 (LPLTLAGRDV…FEQMNNAEYV (180 aa)). 53 to 60 (AQTGTGKT) lines the ATP pocket. The DEAD box signature appears at 165 to 168 (DEAD). A Helicase C-terminal domain is found at 245–390 (RLLQTLIEEE…VSKYNPEALM (146 aa)). Positions 396-421 (PLRLTRSRPGNGPRRAGAPRNRRRSG) are disordered. A compositionally biased stretch (low complexity) spans 402–414 (SRPGNGPRRAGAP).

It belongs to the DEAD box helicase family. RhlB subfamily. As to quaternary structure, component of the RNA degradosome, which is a multiprotein complex involved in RNA processing and mRNA degradation.

It is found in the cytoplasm. The enzyme catalyses ATP + H2O = ADP + phosphate + H(+). In terms of biological role, DEAD-box RNA helicase involved in RNA degradation. Has RNA-dependent ATPase activity and unwinds double-stranded RNA. This is ATP-dependent RNA helicase RhlB from Salmonella dublin (strain CT_02021853).